We begin with the raw amino-acid sequence, 656 residues long: Methionine--tRNA ligase (656 aa).

The 'HIGH' region signature appears at Tyr-11–His-21. Residues Cys-126, Cys-129, Cys-147, and Cys-150 each coordinate Zn(2+). The 'KMSKS' region signature appears at Lys-301 to Ser-305. Lys-304 lines the ATP pocket. The region spanning Asp-555 to Ser-656 is the tRNA-binding domain.

The protein belongs to the class-I aminoacyl-tRNA synthetase family. MetG type 2A subfamily. As to quaternary structure, homodimer. The cofactor is Zn(2+).

It localises to the cytoplasm. It carries out the reaction tRNA(Met) + L-methionine + ATP = L-methionyl-tRNA(Met) + AMP + diphosphate. In terms of biological role, is required not only for elongation of protein synthesis but also for the initiation of all mRNA translation through initiator tRNA(fMet) aminoacylation. This Helicobacter pylori (strain J99 / ATCC 700824) (Campylobacter pylori J99) protein is Methionine--tRNA ligase (metG).